The following is a 151-amino-acid chain: US8.5 protein (151 aa).

Residues 27 to 107 (SSQPLDPEGP…APSPHPRPPG (81 aa)) form a disordered region. Positions 80-91 (SDERGPPRHDRP) are enriched in basic and acidic residues.

Its subcellular location is the host nucleus. It is found in the host nucleolus. The protein is US8.5 protein (US8.5) of Human herpesvirus 1 (strain F) (HHV-1).